Here is a 300-residue protein sequence, read N- to C-terminus: Alpha-ketoglutarate-dependent dioxygenase alkB homolog 4 (300 aa).

The residue at position 2 (Ala2) is an N-acetylalanine. In terms of domain architecture, Fe2OG dioxygenase spans 148–272; it reads PVEQCNLDYS…RVCATFRELS (125 aa). Fe cation is bound by residues His167, Asp169, and His252. Arg263 is a binding site for 2-oxoglutarate.

Belongs to the alkB family. As to quaternary structure, interacts with ZFHX3, MLLT3, MLLT1, HSF4, EP300, TES, EIF3C, MTMR6 and PSMA6. The cofactor is Fe(2+).

The protein localises to the cytoplasm. Its subcellular location is the nucleus. It localises to the nucleolus. The protein resides in the midbody. It catalyses the reaction an N(6)-methyl-2'-deoxyadenosine in DNA + 2-oxoglutarate + O2 = a 2'-deoxyadenosine in DNA + formaldehyde + succinate + CO2. The enzyme catalyses N(6)-methyl-L-lysyl-[protein] + 2-oxoglutarate + O2 = L-lysyl-[protein] + formaldehyde + succinate + CO2. Dioxygenase that mediates demethylation of actin monomethylated at 'Lys-84' (K84me1), thereby acting as a regulator of actomyosin-processes. Demethylation of actin K84me1 is required for maintaining actomyosin dynamics supporting normal cleavage furrow ingression during cytokinesis and cell migration. In addition to proteins, also demethylates DNA: specifically demethylates DNA methylated on the 6th position of adenine (N(6)-methyladenosine) DNA, thereby regulating Polycomb silencing. This Mus musculus (Mouse) protein is Alpha-ketoglutarate-dependent dioxygenase alkB homolog 4.